A 347-amino-acid chain; its full sequence is NADH-ubiquinone oxidoreductase chain 2 (347 aa).

9 helical membrane-spanning segments follow: residues 5 to 22 (ILTI…MVLI), 26 to 45 (WLTV…PILM), 60 to 80 (FLTQ…NLLL), 150 to 170 (NPNL…WGGL), 178 to 198 (ILAY…TYNP), 200 to 220 (LMML…MLFM), 242 to 262 (SLIL…GFIP), 274 to 294 (NMII…YFYM), and 324 to 344 (TLLP…PMML).

Belongs to the complex I subunit 2 family. Core subunit of respiratory chain NADH dehydrogenase (Complex I) which is composed of 45 different subunits. Interacts with TMEM242.

Its subcellular location is the mitochondrion inner membrane. It carries out the reaction a ubiquinone + NADH + 5 H(+)(in) = a ubiquinol + NAD(+) + 4 H(+)(out). Functionally, core subunit of the mitochondrial membrane respiratory chain NADH dehydrogenase (Complex I) which catalyzes electron transfer from NADH through the respiratory chain, using ubiquinone as an electron acceptor. Essential for the catalytic activity and assembly of complex I. The polypeptide is NADH-ubiquinone oxidoreductase chain 2 (Martes flavigula (Yellow-throated marten)).